Reading from the N-terminus, the 320-residue chain is Aspartate carbamoyltransferase catalytic subunit (320 aa).

The carbamoyl phosphate site is built by R58 and T59. K86 lines the L-aspartate pocket. Carbamoyl phosphate-binding residues include R108, H136, and Q139. R169 and R223 together coordinate L-aspartate. Carbamoyl phosphate is bound by residues G264 and P265.

The protein belongs to the aspartate/ornithine carbamoyltransferase superfamily. ATCase family. In terms of assembly, heterododecamer (2C3:3R2) of six catalytic PyrB chains organized as two trimers (C3), and six regulatory PyrI chains organized as three dimers (R2).

It carries out the reaction carbamoyl phosphate + L-aspartate = N-carbamoyl-L-aspartate + phosphate + H(+). The protein operates within pyrimidine metabolism; UMP biosynthesis via de novo pathway; (S)-dihydroorotate from bicarbonate: step 2/3. In terms of biological role, catalyzes the condensation of carbamoyl phosphate and aspartate to form carbamoyl aspartate and inorganic phosphate, the committed step in the de novo pyrimidine nucleotide biosynthesis pathway. In Cereibacter sphaeroides (strain ATCC 17029 / ATH 2.4.9) (Rhodobacter sphaeroides), this protein is Aspartate carbamoyltransferase catalytic subunit.